The chain runs to 131 residues: Profilin-5 (131 aa).

Residues cysteine 13 and cysteine 115 are joined by a disulfide bond. Residues 81-97 (AVIRGKKGAGGITVKKT) carry the Involved in PIP2 interaction motif. Position 111 is a phosphothreonine (threonine 111).

This sequence belongs to the profilin family. Occurs in many kinds of cells as a complex with monomeric actin in a 1:1 ratio. In terms of processing, phosphorylated by MAP kinases.

The protein resides in the cytoplasm. It localises to the cytoskeleton. In terms of biological role, binds to actin and affects the structure of the cytoskeleton. At high concentrations, profilin prevents the polymerization of actin, whereas it enhances it at low concentrations. This chain is Profilin-5, found in Corylus avellana (European hazel).